The primary structure comprises 201 residues: Protein FAR-RED-ELONGATED HYPOCOTYL 1-LIKE (201 aa).

The Nuclear localization sequence (NLS) signature appears at 32 to 35 (KKRK). The short motif at 43 to 46 (LLPL) is the Nuclear export sequence (NES) element.

It belongs to the FHY1 protein family. In terms of assembly, homodimer and heterodimer with FHY1. Interacts with PHYA, especially upon far-red (FR) light illumination. Binds to LAF1 and HFR1. In terms of processing, inactivated by rapid reversible PHYA-mediated phosphorylation.

The protein localises to the nucleus. The protein resides in the cytoplasm. In terms of biological role, can activate transcription. Essential for light-regulated PHYA nuclear accumulation and subsequent PHYA phototropic signaling processes. PHYA-specific signal transducer in response to continuous FR lights. Mediates the association of PHYA with HFR1 and LAF1 in the nucleus in response to FR conditions. Contributes to inhibition of hypocotyl elongation in continuous blue light (B). The protein is Protein FAR-RED-ELONGATED HYPOCOTYL 1-LIKE of Arabidopsis thaliana (Mouse-ear cress).